We begin with the raw amino-acid sequence, 160 residues long: Cytochrome b6-f complex subunit 4 (160 aa).

Transmembrane regions (helical) follow at residues 36 to 56 (LLYI…GLAV), 95 to 115 (LLGI…PFIE), and 128 to 148 (IAMS…IGAC).

It belongs to the cytochrome b family. PetD subfamily. The 4 large subunits of the cytochrome b6-f complex are cytochrome b6, subunit IV (17 kDa polypeptide, PetD), cytochrome f and the Rieske protein, while the 4 small subunits are PetG, PetL, PetM and PetN. The complex functions as a dimer.

The protein localises to the cellular thylakoid membrane. Its function is as follows. Component of the cytochrome b6-f complex, which mediates electron transfer between photosystem II (PSII) and photosystem I (PSI), cyclic electron flow around PSI, and state transitions. In Prochlorococcus marinus (strain MIT 9301), this protein is Cytochrome b6-f complex subunit 4.